A 275-amino-acid chain; its full sequence is N-(5'-phosphoribosyl)anthranilate isomerase 1, chloroplastic (275 aa).

The transit peptide at Met-1–Ser-32 directs the protein to the chloroplast.

It belongs to the TrpF family. Expressed in roots and shoots.

It is found in the plastid. The protein localises to the chloroplast. The enzyme catalyses N-(5-phospho-beta-D-ribosyl)anthranilate = 1-(2-carboxyphenylamino)-1-deoxy-D-ribulose 5-phosphate. It participates in amino-acid biosynthesis; L-tryptophan biosynthesis; L-tryptophan from chorismate: step 3/5. Functionally, catalyzes the conversion of 5-phosphoribosylanthranilate to l-(O-carboxyphenylamino)-l-deoxyribulose-5-phosphate, which is the third step of the tryptophan biosynthetic pathway. The chain is N-(5'-phosphoribosyl)anthranilate isomerase 1, chloroplastic (PAI1) from Arabidopsis thaliana (Mouse-ear cress).